The sequence spans 275 residues: Shikimate dehydrogenase (NADP(+)) (275 aa).

Residues 17 to 19 (SKS) and T64 each bind shikimate. The active-site Proton acceptor is the K68. An NADP(+)-binding site is contributed by E80. Positions 89 and 105 each coordinate shikimate. NADP(+) is bound by residues 129–133 (GAGGA), 152–157 (NRTFFK), and M216. Y218 contributes to the shikimate binding site. NADP(+) is bound at residue G240.

The protein belongs to the shikimate dehydrogenase family. As to quaternary structure, homodimer.

It carries out the reaction shikimate + NADP(+) = 3-dehydroshikimate + NADPH + H(+). The protein operates within metabolic intermediate biosynthesis; chorismate biosynthesis; chorismate from D-erythrose 4-phosphate and phosphoenolpyruvate: step 4/7. Its function is as follows. Involved in the biosynthesis of the chorismate, which leads to the biosynthesis of aromatic amino acids. Catalyzes the reversible NADPH linked reduction of 3-dehydroshikimate (DHSA) to yield shikimate (SA). The sequence is that of Shikimate dehydrogenase (NADP(+)) from Pectobacterium atrosepticum (strain SCRI 1043 / ATCC BAA-672) (Erwinia carotovora subsp. atroseptica).